Here is a 232-residue protein sequence, read N- to C-terminus: UPF0177 protein in abiGi 5'region (232 aa).

The next 6 helical transmembrane spans lie at 12–32 (YLSLFFLLFAIYWFPDVILAY), 47–67 (VVATWIFLGNMSISLFLGILI), 86–106 (LLFLLITTIILFVIYFFSYTY), 124–144 (SIQIVFPFVQFITIAICAPIF), 165–185 (IVSCVGFAWMHTGPNPILIVY), and 206–226 (ILVHGVFNALLPIVIPLLQVI).

Belongs to the UPF0177 family.

The protein resides in the cell membrane. Its function is as follows. The function of this protein is currently unknown, but it has been shown that it is not necessary for phage resistance. This Lactococcus lactis subsp. cremoris (Streptococcus cremoris) protein is UPF0177 protein in abiGi 5'region.